Here is a 417-residue protein sequence, read N- to C-terminus: Gamma-glutamyl phosphate reductase (417 aa).

It belongs to the gamma-glutamyl phosphate reductase family.

It is found in the cytoplasm. The enzyme catalyses L-glutamate 5-semialdehyde + phosphate + NADP(+) = L-glutamyl 5-phosphate + NADPH + H(+). Its pathway is amino-acid biosynthesis; L-proline biosynthesis; L-glutamate 5-semialdehyde from L-glutamate: step 2/2. Functionally, catalyzes the NADPH-dependent reduction of L-glutamate 5-phosphate into L-glutamate 5-semialdehyde and phosphate. The product spontaneously undergoes cyclization to form 1-pyrroline-5-carboxylate. The sequence is that of Gamma-glutamyl phosphate reductase from Proteus mirabilis (strain HI4320).